Consider the following 343-residue polypeptide: Anthranilate phosphoribosyltransferase (343 aa).

5-phospho-alpha-D-ribose 1-diphosphate is bound by residues G84, 87 to 88 (GD), T92, 94 to 97 (NIST), 112 to 120 (KHGNRGVSS), and S124. Residue G84 coordinates anthranilate. S96 provides a ligand contact to Mg(2+). N115 provides a ligand contact to anthranilate. Position 170 (R170) interacts with anthranilate. Mg(2+) is bound by residues D229 and E230.

Belongs to the anthranilate phosphoribosyltransferase family. In terms of assembly, homodimer. The cofactor is Mg(2+).

It catalyses the reaction N-(5-phospho-beta-D-ribosyl)anthranilate + diphosphate = 5-phospho-alpha-D-ribose 1-diphosphate + anthranilate. Its pathway is amino-acid biosynthesis; L-tryptophan biosynthesis; L-tryptophan from chorismate: step 2/5. In terms of biological role, catalyzes the transfer of the phosphoribosyl group of 5-phosphorylribose-1-pyrophosphate (PRPP) to anthranilate to yield N-(5'-phosphoribosyl)-anthranilate (PRA). The polypeptide is Anthranilate phosphoribosyltransferase (Burkholderia orbicola (strain AU 1054)).